We begin with the raw amino-acid sequence, 142 residues long: Hemoglobin subunit beta (142 aa).

A Globin domain is found at 3–142 (KLSEDQEHYI…VAEALSSNYH (140 aa)). Heme b contacts are provided by His60 and His89.

The protein belongs to the globin family. Heterotetramer of two alpha chains and two beta chains. In terms of tissue distribution, red blood cells.

Involved in oxygen transport from gills to the various peripheral tissues. This chain is Hemoglobin subunit beta (HBB), found in Hemitrygon akajei (Red stingray).